A 437-amino-acid polypeptide reads, in one-letter code: Putative galacturan 1,4-alpha-galacturonidase A (437 aa).

Positions 1–20 (MKLSGSSALLLLGFGLLGHA) are cleaved as a signal peptide. N-linked (GlcNAc...) asparagine glycosylation is found at Asn30, Asn101, Asn110, Asn161, Asn196, and Asn203. Residues 222-243 (SDHVTITNWVYEGGDDAVAFKP) form a PbH1 1 repeat. The active-site Proton donor is Asp236. N-linked (GlcNAc...) asparagine glycosylation is found at Asn244, Asn252, Asn278, Asn324, Asn352, Asn371, Asn382, and Asn387. 3 PbH1 repeats span residues 245 to 265 (STNI…AFGS), 276 to 302 (VENI…YFKS), and 322 to 343 (VRNV…YIDT). Cys396 and Cys402 are disulfide-bonded.

This sequence belongs to the glycosyl hydrolase 28 family.

The protein localises to the secreted. The catalysed reaction is [(1-&gt;4)-alpha-D-galacturonosyl](n) + H2O = alpha-D-galacturonate + [(1-&gt;4)-alpha-D-galacturonosyl](n-1). Functionally, specific in hydrolyzing the terminal glycosidic bond of polygalacturonic acid and oligogalacturonates. This Aspergillus flavus (strain ATCC 200026 / FGSC A1120 / IAM 13836 / NRRL 3357 / JCM 12722 / SRRC 167) protein is Putative galacturan 1,4-alpha-galacturonidase A (rgxA).